Consider the following 229-residue polypeptide: Putative ABC transporter permease protein ORF1 (229 aa).

Residues 23 to 214 enclose the ABC transmembrane type-1 domain; it reads ALNSLLVALA…LPSLAFFALV (192 aa). Transmembrane regions (helical) follow at residues 27–47, 62–82, 91–111, 150–170, and 194–214; these read LLVALATAAVTVLIATPMAYV, WVVVSQAFPFVLLIIPLFLVL, LTGLVLVYVVWSLPFALWMLA, ATALFAFVTAWNEFFFALVLL, and SPAGAAAFLATLPSLAFFALV.

This sequence belongs to the binding-protein-dependent transport system permease family. MalFG subfamily.

Its subcellular location is the cell membrane. May participate in oleandomycin secretion during antibiotic production. This is Putative ABC transporter permease protein ORF1 from Streptomyces antibioticus.